Reading from the N-terminus, the 367-residue chain is Outer membrane protein assembly factor BamC (367 aa).

A signal peptide spans 1–16 (MRLLPLFLMVTLAASG). A lipid anchor (N-palmitoyl cysteine) is attached at C17. A lipid anchor (S-diacylglycerol cysteine) is attached at C17.

This sequence belongs to the BamC family. Part of the Bam complex.

It localises to the cell outer membrane. Part of the outer membrane protein assembly complex, which is involved in assembly and insertion of beta-barrel proteins into the outer membrane. This is Outer membrane protein assembly factor BamC from Thiobacillus denitrificans (strain ATCC 25259 / T1).